A 499-amino-acid polypeptide reads, in one-letter code: MEFLKQLEVWFVVGSQHLYGAETLKQVADHAQTITNQLNEKAGLPLKIVLKPTGTTLDEISAIARDANHSEQCVGVMVWMHTFSPAKMWIPALSQLNKPLLQFHTQFNKDLPWGEIDMDFMNLNQTAHGGREFGFMGARLRLPRTVVVGYWEDKGAHEKIARWMRIAAAVYDSRKMKVARFGDNMRNVAVTEGDKVEAQIQFGYQVNYHPVGDLVKVINDVSTGDINALLDEYETIYTLTDAVKMGGAYRESLYEAARQELGMKKFLQDGGFGAFTTTFEDLYGIHQLPGLACQRLMQQGYGFGGEGDWKTAALLRTLKVMGTGLPGGTSFMEDYTYHLEDGNNLVLGAHMLEVCPSIASKKPVLDVQRLGIGQKAPPARLLFSAPAGKAVNASLIDMGNRFRLVVNNLDVVDLPQSLPKLPVACALWEPKPNLEVGAEAWILAGAAHHSVFSQAVDAEYLRTFAEMMGIEFLLIDENTTIPELKKEILWNEVYYKLCK.

Mn(2+) contacts are provided by Glu306, Glu333, His350, and His449.

The protein belongs to the arabinose isomerase family. It depends on Mn(2+) as a cofactor.

It carries out the reaction beta-L-arabinopyranose = L-ribulose. The protein operates within carbohydrate degradation; L-arabinose degradation via L-ribulose; D-xylulose 5-phosphate from L-arabinose (bacterial route): step 1/3. Catalyzes the conversion of L-arabinose to L-ribulose. The sequence is that of L-arabinose isomerase from Tolumonas auensis (strain DSM 9187 / NBRC 110442 / TA 4).